A 147-amino-acid polypeptide reads, in one-letter code: Ubiquitin-conjugating enzyme E2 D2 (147 aa).

Positions 1–147 (MALKRIHKEL…SREWTQKYAM (147 aa)) constitute a UBC core domain. Residue Cys85 is the Glycyl thioester intermediate of the active site.

It belongs to the ubiquitin-conjugating enzyme family. Interacts with SCF (SKP1-CUL1-F-box protein) E3 ubiquitin ligase complex. Interacts with CNOT4 (via RING domain). Interacts with E3 ubiquitin-protein ligases CBLC, PJA1 and PJA2. Interacts with PDZRN3. Interacts with PPP1R11. Interacts with E3 ubiquitin-protein ligase PHF7; the interaction inhibits cleavage of PHF7 and promotes association of the complex with the nucleosome core particle.

The enzyme catalyses S-ubiquitinyl-[E1 ubiquitin-activating enzyme]-L-cysteine + [E2 ubiquitin-conjugating enzyme]-L-cysteine = [E1 ubiquitin-activating enzyme]-L-cysteine + S-ubiquitinyl-[E2 ubiquitin-conjugating enzyme]-L-cysteine.. The catalysed reaction is S-ubiquitinyl-[E1 ubiquitin-activating enzyme]-L-cysteine + [acceptor protein]-L-lysine = [E1 ubiquitin-activating enzyme]-L-cysteine + N(6)-monoubiquitinyl-[acceptor protein]-L-lysine.. It participates in protein modification; protein ubiquitination. Its function is as follows. Accepts ubiquitin from the E1 complex and catalyzes its covalent attachment to other proteins. In vitro catalyzes 'Lys-48'-linked polyubiquitination. Mediates the selective degradation of short-lived and abnormal proteins. Functions in the E6/E6-AP-induced ubiquitination of p53/TP53. Mediates ubiquitination of PEX5 and SQSTM1 and autoubiquitination of STUB1 and TRAF6. Involved in the signal-induced conjugation and subsequent degradation of NFKBIA, FBXW2-mediated GCM1 ubiquitination and degradation, MDM2-dependent degradation of p53/TP53 and the activation of MAVS in the mitochondria by RIGI in response to viral infection. Essential for viral activation of IRF3. This chain is Ubiquitin-conjugating enzyme E2 D2 (UBE2D2), found in Sus scrofa (Pig).